The primary structure comprises 853 residues: Rod cGMP-specific 3',5'-cyclic phosphodiesterase subunit beta (853 aa).

An N-acetylserine modification is found at Ser2. GAF domains follow at residues 71 to 220 and 252 to 429; these read NMER…TLNL and DIER…GWSV. A PDEase domain is found at 481–814; the sequence is EEDELGKILK…KEWKALADEY (334 aa). The Proton donor role is filled by His557. The a divalent metal cation site is built by His561, His597, Asp598, and Asp718. Cys850 carries the post-translational modification Cysteine methyl ester. Cys850 carries the S-geranylgeranyl cysteine lipid modification. Positions 851 to 853 are cleaved as a propeptide — removed in mature form; that stretch reads RIL.

This sequence belongs to the cyclic nucleotide phosphodiesterase family. As to quaternary structure, oligomer composed of two catalytic chains (alpha and beta), an inhibitory chain (gamma) and the delta chain. The cofactor is a divalent metal cation.

It is found in the membrane. It localises to the cell projection. The protein resides in the cilium. Its subcellular location is the photoreceptor outer segment. It catalyses the reaction 3',5'-cyclic GMP + H2O = GMP + H(+). Necessary for the formation of a functional phosphodiesterase holoenzyme. Involved in retinal circadian rhythm photoentrainment via modulation of UVA and orange light-induced phase-shift of the retina clock. May participate in processes of transmission and amplification of the visual signal. Functionally, rod-specific cGMP phosphodiesterase that catalyzes the hydrolysis of 3',5'-cyclic GMP. Necessary for the formation of a functional phosphodiesterase holoenzyme. Involved in retinal circadian rhythm photoentrainment via modulation of UVA and orange light-induced phase-shift of the retina clock. May participate in processes of transmission and amplification of the visual signal. The protein is Rod cGMP-specific 3',5'-cyclic phosphodiesterase subunit beta (PDE6B) of Bos taurus (Bovine).